We begin with the raw amino-acid sequence, 202 residues long: Protein U22 (202 aa).

A run of 2 helical transmembrane segments spans residues 5 to 25 and 172 to 192; these read GWSL…LHII and FVYY…SCWF.

It localises to the host membrane. This is Protein U22 (U22) from Human herpesvirus 6B (strain Z29) (HHV-6 variant B).